The chain runs to 246 residues: Submandibular gland secretory Glx-rich protein CA (246 aa).

Residues 1-18 (MLVVLLTAALLALSSAQG) form the signal peptide. The disordered stretch occupies residues 14 to 223 (SSAQGTDEEV…SGRPKKPLLP (210 aa)). Low complexity-rich tracts occupy residues 39-50 (PVDSGSDPPSAD), 58-71 (EGES…EPPA), 81-93 (QQEP…QEPP), 104-116 (QQEP…QEPP), 127-141 (QQEP…PPAT), 150-159 (QQESTQAENQ), and 178-196 (VESP…QQTN). 5 tandem repeats follow at residues 67–89 (EEPP…QAEN), 90–112 (QEPP…QAEN), 113–135 (QEPP…QAED), 136–158 (QQPP…QAEN), and 159–181 (QEPS…VESP). The 5 X 23 AA tandem repeats stretch occupies residues 67–181 (EEPPATSGSE…QPEEGNVESP (115 aa)). The span at 197–216 (PEEKPPAPKTQEEPQHDSGR) shows a compositional bias: basic and acidic residues.

As to expression, submandibular gland acinar cells.

Its subcellular location is the secreted. In terms of biological role, GRP proteins have a marked affinity for hydroxyapatite. They may play a role in the formation of the protective acquired pellicle at the saliva-tooth interface. The polypeptide is Submandibular gland secretory Glx-rich protein CA (Grpca) (Rattus norvegicus (Rat)).